The chain runs to 261 residues: Small ribosomal subunit protein uS2 (261 aa).

Belongs to the universal ribosomal protein uS2 family.

The chain is Small ribosomal subunit protein uS2 from Paracoccus denitrificans (strain Pd 1222).